We begin with the raw amino-acid sequence, 372 residues long: Bifunctional enzyme IspD/IspF (372 aa).

Positions Met1–Leu211 are 2-C-methyl-D-erythritol 4-phosphate cytidylyltransferase. Positions Phe212–Ile372 are 2-C-methyl-D-erythritol 2,4-cyclodiphosphate synthase. A divalent metal cation-binding residues include Asp218 and His220. 4-CDP-2-C-methyl-D-erythritol 2-phosphate-binding positions include Asp218–His220 and His244–Ser245. His252 contacts a divalent metal cation. 4-CDP-2-C-methyl-D-erythritol 2-phosphate-binding positions include Asp266–Gly268, Phe271–Asp275, Thr342–Glu345, Phe349, and Arg352.

This sequence in the N-terminal section; belongs to the IspD/TarI cytidylyltransferase family. IspD subfamily. It in the C-terminal section; belongs to the IspF family. The cofactor is a divalent metal cation.

The enzyme catalyses 2-C-methyl-D-erythritol 4-phosphate + CTP + H(+) = 4-CDP-2-C-methyl-D-erythritol + diphosphate. The catalysed reaction is 4-CDP-2-C-methyl-D-erythritol 2-phosphate = 2-C-methyl-D-erythritol 2,4-cyclic diphosphate + CMP. Its pathway is isoprenoid biosynthesis; isopentenyl diphosphate biosynthesis via DXP pathway; isopentenyl diphosphate from 1-deoxy-D-xylulose 5-phosphate: step 2/6. It participates in isoprenoid biosynthesis; isopentenyl diphosphate biosynthesis via DXP pathway; isopentenyl diphosphate from 1-deoxy-D-xylulose 5-phosphate: step 4/6. Its function is as follows. Bifunctional enzyme that catalyzes the formation of 4-diphosphocytidyl-2-C-methyl-D-erythritol from CTP and 2-C-methyl-D-erythritol 4-phosphate (MEP) (IspD), and catalyzes the conversion of 4-diphosphocytidyl-2-C-methyl-D-erythritol 2-phosphate (CDP-ME2P) to 2-C-methyl-D-erythritol 2,4-cyclodiphosphate (ME-CPP) with a corresponding release of cytidine 5-monophosphate (CMP) (IspF). The chain is Bifunctional enzyme IspD/IspF from Campylobacter concisus (strain 13826).